Consider the following 439-residue polypeptide: Vacuolar protein sorting-associated protein 4 (439 aa).

The MIT domain maps to 8–75; sequence LSKGIDLVQK…TRAEQLKDHL (68 aa). Residues 76–113 form a disordered region; the sequence is EKQAQNKSTAESSVNGSTKAKKSNGDGNGSGDDNDDAD. The segment covering 80-93 has biased composition (polar residues); the sequence is QNKSTAESSVNGST. An ATP-binding site is contributed by 175 to 182; sequence GPPGTGKS.

Belongs to the AAA ATPase family. In terms of assembly, monomer or homodimer (in nucleotide-free form). Decamer, dodecamer or tetradecamer of two stacked respective homooligomeric rings (when bound to ATP); the dodecameric form seems to be predominant.

The protein resides in the endosome membrane. Functionally, pre-vacuolar protein sorting protein involved in the transport of biosynthetic membrane proteins from the prevacuolar/endosomal compartment to the vacuole. Required for multivesicular body (MVB) protein sorting. Catalyzes the ATP-dependent dissociation of class E VPS proteins from endosomal membranes, such as the disassembly of the ESCRT-III complex. Required for extracellular secretion of the secreted aspartyl proteases SAP2, SAP4, SAP5, and SAP6. Its regulation of the pre-vacuolar secretory pathway is critical for virulence. The sequence is that of Vacuolar protein sorting-associated protein 4 from Candida albicans (strain SC5314 / ATCC MYA-2876) (Yeast).